We begin with the raw amino-acid sequence, 239 residues long: Ribonuclease PH (239 aa).

Phosphate is bound by residues Arg-86 and 124-126 (GTR).

The protein belongs to the RNase PH family. As to quaternary structure, homohexameric ring arranged as a trimer of dimers.

It catalyses the reaction tRNA(n+1) + phosphate = tRNA(n) + a ribonucleoside 5'-diphosphate. Its function is as follows. Phosphorolytic 3'-5' exoribonuclease that plays an important role in tRNA 3'-end maturation. Removes nucleotide residues following the 3'-CCA terminus of tRNAs; can also add nucleotides to the ends of RNA molecules by using nucleoside diphosphates as substrates, but this may not be physiologically important. Probably plays a role in initiation of 16S rRNA degradation (leading to ribosome degradation) during starvation. The sequence is that of Ribonuclease PH from Marinomonas sp. (strain MWYL1).